Consider the following 488-residue polypeptide: Proline--tRNA ligase (488 aa).

This sequence belongs to the class-II aminoacyl-tRNA synthetase family. ProS type 3 subfamily. Homodimer.

It localises to the cytoplasm. It catalyses the reaction tRNA(Pro) + L-proline + ATP = L-prolyl-tRNA(Pro) + AMP + diphosphate. Functionally, catalyzes the attachment of proline to tRNA(Pro) in a two-step reaction: proline is first activated by ATP to form Pro-AMP and then transferred to the acceptor end of tRNA(Pro). In Pyrobaculum arsenaticum (strain DSM 13514 / JCM 11321 / PZ6), this protein is Proline--tRNA ligase.